Reading from the N-terminus, the 1382-residue chain is Y' element ATP-dependent helicase protein 1 copy 4 (1382 aa).

A Helicase ATP-binding domain is found at 383–560 (EIYMADTPSV…LQRIGLTGLA (178 aa)). 396–403 (APPGYGKT) is a binding site for ATP. The 150-residue stretch at 617–766 (KLLLALFEIE…EFYGLESKKG (150 aa)) folds into the Helicase C-terminal domain. 2 disordered regions span residues 840–864 (ANAS…NVRT) and 880–1007 (TTES…DINK). The segment covering 880–983 (TTESTNSSTN…ATTTESTNAS (104 aa)) has biased composition (low complexity). Basic and acidic residues predominate over residues 984–1007 (AKEDANKDGNAEDNRFHPVTDINK).

Belongs to the helicase family. Yeast subtelomeric Y' repeat subfamily.

Its function is as follows. Catalyzes DNA unwinding and is involved in telomerase-independent telomere maintenance. This is Y' element ATP-dependent helicase protein 1 copy 4 (YRF1-4) from Saccharomyces cerevisiae (strain ATCC 204508 / S288c) (Baker's yeast).